The chain runs to 494 residues: Paired box protein Pax-2-B (494 aa).

The segment at residues 15 to 141 (RHGGVNQLGG…SSINRIIRTK (127 aa)) is a DNA-binding region (paired). The PAI subdomain stretch occupies residues 18 to 74 (GVNQLGGVFVNGRPLPDVVRQRIVELAHQGVRPCDISRQLRVSHGCVSKILGRYYET). The segment at 93-141 (KVVDKIADYKRQNPTMFAWEIRDRLLAEGICDNDTVPSVSSINRIIRTK) is RED subdomain. Residues 142 to 221 (VQQPFHPTPD…GDSQSSVESL (80 aa)) are disordered. The span at 163 to 175 (VPSTASPPVSSAS) shows a compositional bias: low complexity.

In terms of tissue distribution, expression becomes spatially localized at mid-gastrula stages and is localized to the nervous system (midbrain, hindbrain, spinal cord), sensory organs (optic vesicle and stalk, otic vesicle), visceral arches, developing excretory system (pronephros, pronephric duct, rectal diverticulum, proctodaeum) and thryoid gland. Splicing does not appear to be tissue-specific.

The protein localises to the nucleus. Functionally, probable transcription factor. Involved in kidney development, acting synergistically with lhx1/lim-1 in pronephric morphogenesis during the tailbud stages. The sequence is that of Paired box protein Pax-2-B (pax2-b) from Xenopus laevis (African clawed frog).